The following is a 75-amino-acid chain: Protease B inhibitor 2 (75 aa).

Thr74 is subject to Phosphothreonine.

Belongs to the protease inhibitor I9 family. As to quaternary structure, part of the heterodimeric LMA1 complex together with the thioredoxin II/TRX2. LMA1 binds to the ATPase SEC18.

It localises to the cytoplasm. Functionally, cytosolic inhibitor of vacuolar proteinase B (yscB), probably regulating protease B activity during limited proteolysis. PBI2 is a component of the LMA1 complex, which is involved in the facilitation of vesicle fusion such as homotypic vacuole and ER-derived COPII vesicle fusion with the Golgi. This Saccharomyces cerevisiae (strain ATCC 204508 / S288c) (Baker's yeast) protein is Protease B inhibitor 2 (PBI2).